The chain runs to 168 residues: Peptide deformylase (168 aa).

Fe cation is bound by residues cysteine 92 and histidine 134. Residue glutamate 135 is part of the active site. Histidine 138 contacts Fe cation.

Belongs to the polypeptide deformylase family. Requires Fe(2+) as cofactor.

The catalysed reaction is N-terminal N-formyl-L-methionyl-[peptide] + H2O = N-terminal L-methionyl-[peptide] + formate. Removes the formyl group from the N-terminal Met of newly synthesized proteins. Requires at least a dipeptide for an efficient rate of reaction. N-terminal L-methionine is a prerequisite for activity but the enzyme has broad specificity at other positions. This is Peptide deformylase from Stutzerimonas stutzeri (strain A1501) (Pseudomonas stutzeri).